A 213-amino-acid polypeptide reads, in one-letter code: MAKNYYDITLALAGICQSARLVQQLAHQGHCDGDALHVSLNSIIDMNPSSTLAVFGGSEANLRVGLETLLGVLNASSRQGLNAELTRYTLSLMVLERKLSSAKGALDTLGNRINGLQRQLEHFDLQSETLMSAMAAIYVDVISPLGPRIQVTGSPAVLQSPQVQAKVRATLLAGIRAAVLWHQVGGGRLQLMFSRNRLTTQAKQILAHLTPEL.

Residues Gln79–Gln126 are a coiled coil.

The protein belongs to the HflD family. In terms of assembly, interacts with CII protein from phage lambda.

It localises to the cytoplasm. Its subcellular location is the cell inner membrane. In terms of biological role, negative regulator of phage lambda lysogenization. Contributes to the degradation of the phage regulatory protein CII. Acts probably by holding CII on the membrane surface, away from the target promoters, but close to the FtsH protease. This is High frequency lysogenization protein HflD from Escherichia coli O127:H6 (strain E2348/69 / EPEC).